The following is a 78-amino-acid chain: Alpha-neurotoxin homolog 1 (78 aa).

The N-terminal stretch at 1–21 (MKTLLLTLVVVTIVCLDFGYT) is a signal peptide. Cystine bridges form between Cys24–Cys42, Cys37–Cys57, Cys59–Cys70, and Cys71–Cys76.

This sequence belongs to the three-finger toxin family. Short-chain subfamily. Orphan group XII sub-subfamily. As to expression, expressed by the venom gland.

It localises to the secreted. The sequence is that of Alpha-neurotoxin homolog 1 from Micrurus corallinus (Brazilian coral snake).